The following is a 548-amino-acid chain: Membrane protein insertase YidC (548 aa).

A helical transmembrane segment spans residues 6-26; sequence NLLVIALLFVSFMIWQAWEQD. Residues 28–56 are disordered; the sequence is NPQPQTQQTTQTTTTAAGSAADQGVPASG. A compositionally biased stretch (low complexity) spans 29 to 42; it reads PQPQTQQTTQTTTT. Transmembrane regions (helical) follow at residues 350–370, 424–444, 458–478, and 499–519; these read FVGN…GIMY, FPLI…MGSI, LSAQ…MFFI, and PVIF…YYIV.

Belongs to the OXA1/ALB3/YidC family. Type 1 subfamily. Interacts with the Sec translocase complex via SecD. Specifically interacts with transmembrane segments of nascent integral membrane proteins during membrane integration.

It is found in the cell inner membrane. In terms of biological role, required for the insertion and/or proper folding and/or complex formation of integral membrane proteins into the membrane. Involved in integration of membrane proteins that insert both dependently and independently of the Sec translocase complex, as well as at least some lipoproteins. Aids folding of multispanning membrane proteins. This Salmonella choleraesuis (strain SC-B67) protein is Membrane protein insertase YidC.